The sequence spans 427 residues: Serine protease inhibitor 88Ea (427 aa).

An N-terminal signal peptide occupies residues 1–18 (MHILSISLMAVLPAIALA). Asn224 is a glycosylation site (N-linked (GlcNAc...) asparagine).

It belongs to the serpin family. Expressed in nurse cells and oocytes. Expressed in wings.

Its subcellular location is the secreted. In terms of biological role, serine protease inhibitor with activity toward trypsin. Negatively regulates the Toll signaling pathway and suppresses the expression of the antifungal peptide drosomycin. Its negative regulation of the Toll signaling pathway also results in the inhibition of the melanization immune response via the phenoloxidase (PPO1) cascade. Essential for unfolding and expansion of the wings after emergence from the pupal case. May regulate the Toll pathway by blocking the proteolysis of the Toll ligand spz. The chain is Serine protease inhibitor 88Ea from Drosophila melanogaster (Fruit fly).